The primary structure comprises 161 residues: Photosystem II extrinsic protein V (161 aa).

An N-terminal signal peptide occupies residues 1–25; that stretch reads MKKFFISVVFIVLLTFTTFINSATA. Residues C61, C64, H65, and H116 each coordinate heme c.

Belongs to the cytochrome c family. PsbV subfamily. As to quaternary structure, PSII is composed of 1 copy each of membrane proteins PsbA, PsbB, PsbC, PsbD, PsbE, PsbF, PsbH, PsbI, PsbJ, PsbK, PsbL, PsbM, PsbT, PsbX, PsbY, PsbZ, Psb30/Ycf12, peripheral proteins PsbO, CyanoQ (PsbQ), PsbU, PsbV and a large number of cofactors. It forms dimeric complexes. Heme c is required as a cofactor.

It is found in the cellular thylakoid membrane. Functionally, one of the extrinsic, lumenal subunits of photosystem II (PSII). PSII is a light-driven water plastoquinone oxidoreductase, using light energy to abstract electrons from H(2)O, generating a proton gradient subsequently used for ATP formation. The extrinsic proteins stabilize the structure of photosystem II oxygen-evolving complex (OEC), the ion environment of oxygen evolution and protect the OEC against heat-induced inactivation. Low-potential cytochrome c that plays a role in the OEC of PSII. The protein is Photosystem II extrinsic protein V of Trichodesmium erythraeum (strain IMS101).